Reading from the N-terminus, the 619-residue chain is CLPTM1-like membrane protein cnrB (619 aa).

The disordered stretch occupies residues 1–21; the sequence is MNNQGGAVAANGQRPQAQQQQ. Positions 9–21 are enriched in low complexity; the sequence is AANGQRPQAQQQQ. 6 helical membrane-spanning segments follow: residues 26–46, 324–344, 360–380, 384–404, 445–465, and 474–496; these read IMGI…ASFA, WILG…FLAF, LSVK…LYLL, TSYM…WKLG, YLSW…LYYH, and VVSS…QLFI. Residues 566–619 form a disordered region; the sequence is SEEAEEVQQQDKKEIKEKVEEREEEKQEEEEEEKEKEEESTSSSKVTKRKTKKV. Basic and acidic residues predominate over residues 574–590; that stretch reads QQDKKEIKEKVEEREEE. A compositionally biased stretch (acidic residues) spans 591–605; sequence KQEEEEEEKEKEEES.

The protein belongs to the CLPTM1 family.

Its subcellular location is the membrane. In Dictyostelium discoideum (Social amoeba), this protein is CLPTM1-like membrane protein cnrB (cnrB).